Reading from the N-terminus, the 391-residue chain is D-xylose 1-dehydrogenase (NADP(+)) (391 aa).

It belongs to the Gfo/Idh/MocA family.

The enzyme catalyses D-xylose + NADP(+) = D-xylono-1,5-lactone + NADPH + H(+). Its function is as follows. NADP-dependent D-xylose dehydrogenase catalyzing the oxydation of D-xylose into D-xylonolactone. Also displays some, albeit lower activity with D-glucose, D-galactose and L-arabinose as substrate. Probably not involved in D-xylose degradation, as it has been shown that H.jecorina assimilates D-xylose via D-xylose reductase and xylitol dehydrogenase, and it is unable to grow on D-xylonic acid as sole carbon source. May play a role in the regeneration of NADP(+) in the presence of D-xylose. In Hypocrea jecorina (strain ATCC 56765 / BCRC 32924 / NRRL 11460 / Rut C-30) (Trichoderma reesei), this protein is D-xylose 1-dehydrogenase (NADP(+)).